Consider the following 483-residue polypeptide: tRNA sulfurtransferase (483 aa).

The THUMP domain maps to 62-166 (PQICDALTRV…QDKLTLIKAR (105 aa)). ATP contacts are provided by residues 184–185 (LI), Lys-266, Gly-288, and Gln-297. Cys-345 and Cys-457 are oxidised to a cystine. The Rhodanese domain maps to 405–483 (LADTDVLLDI…GYTNVKVYRP (79 aa)). Cys-457 functions as the Cysteine persulfide intermediate in the catalytic mechanism.

The protein belongs to the ThiI family.

It is found in the cytoplasm. It carries out the reaction [ThiI sulfur-carrier protein]-S-sulfanyl-L-cysteine + a uridine in tRNA + 2 reduced [2Fe-2S]-[ferredoxin] + ATP + H(+) = [ThiI sulfur-carrier protein]-L-cysteine + a 4-thiouridine in tRNA + 2 oxidized [2Fe-2S]-[ferredoxin] + AMP + diphosphate. The catalysed reaction is [ThiS sulfur-carrier protein]-C-terminal Gly-Gly-AMP + S-sulfanyl-L-cysteinyl-[cysteine desulfurase] + AH2 = [ThiS sulfur-carrier protein]-C-terminal-Gly-aminoethanethioate + L-cysteinyl-[cysteine desulfurase] + A + AMP + 2 H(+). Its pathway is cofactor biosynthesis; thiamine diphosphate biosynthesis. Its function is as follows. Catalyzes the ATP-dependent transfer of a sulfur to tRNA to produce 4-thiouridine in position 8 of tRNAs, which functions as a near-UV photosensor. Also catalyzes the transfer of sulfur to the sulfur carrier protein ThiS, forming ThiS-thiocarboxylate. This is a step in the synthesis of thiazole, in the thiamine biosynthesis pathway. The sulfur is donated as persulfide by IscS. The sequence is that of tRNA sulfurtransferase from Yersinia enterocolitica serotype O:8 / biotype 1B (strain NCTC 13174 / 8081).